Consider the following 853-residue polypeptide: Neural cell adhesion molecule 1 (853 aa).

The signal sequence occupies residues 1–19 (MLQTKNLIWTLFFLGTAVS). 5 Ig-like C2-type domains span residues 20–111 (LQVD…ATVN), 116–205 (QKLM…KDIQ), 212–300 (PTVQ…ASIH), 307–412 (PKIT…LEVQ), and 415–500 (PKLQ…ESLE). Topologically, residues 20 to 719 (LQVDIVPSQG…NGSPTSGLST (700 aa)) are extracellular. 2 cysteine pairs are disulfide-bonded: Cys-41-Cys-96 and Cys-139-Cys-189. Residues 152-156 (KHKGR) and 161-165 (KKDVR) contribute to the heparin site. Asn-222 is a glycosylation site (N-linked (GlcNAc...) asparagine). Residues Cys-235 and Cys-286 are joined by a disulfide bond. 5 N-linked (GlcNAc...) asparagine glycosylation sites follow: Asn-314, Asn-346, Asn-432, Asn-458, and Asn-487. Cys-328 and Cys-394 are oxidised to a cystine. An intrachain disulfide couples Cys-435 to Cys-488. Fibronectin type-III domains follow at residues 508–607 (TPSS…TQPV) and 609–704 (EPSA…SAQP). Residues 720–737 (GAIVGILVVTFVLLLVAV) form a helical membrane-spanning segment. Residues 738–853 (DVTCYFLNKC…TQIKVNESKA (116 aa)) are Cytoplasmic-facing. The disordered stretch occupies residues 764–853 (GAKGKDMEEG…TQIKVNESKA (90 aa)). 2 stretches are compositionally biased toward basic and acidic residues: residues 766-807 (KGKD…HTEP) and 815-829 (EPEKGPVEAKPETET). Residues Ser-778 and Ser-782 each carry the phosphoserine modification. Over residues 838–853 (TVPNDATQIKVNESKA) the composition is skewed to polar residues.

In terms of assembly, interacts with MDK. Found in a complex with SLC39A6, SLC39A10 and with NCAM1; this complex controls NCAM1 phosphorylation and integration into focal adhesion complexes during epithelial-tomesenchymal transition. Interacts with synaptic plasticity regulator PANTS. Polysialylated by ST8SIA2 and ST8SIA4. Polysialylation modulates cell interactions by confering both attractive and repulsive properties that are highly regulated by ST8SIA2 and ST8SIA4. Polysialylation is formed on a-2,3-linked sialic acid of core glycans.

The protein resides in the cell membrane. Its function is as follows. This protein is a cell adhesion molecule involved in neuron-neuron adhesion, neurite fasciculation, outgrowth of neurites, etc. The chain is Neural cell adhesion molecule 1 from Bos taurus (Bovine).